Here is a 128-residue protein sequence, read N- to C-terminus: Small ribosomal subunit protein uS12 (128 aa).

Positions 1–30 are disordered; the sequence is MPTINQLIRKGREPKERKSKSPALMGNPQK. Asp-89 carries the 3-methylthioaspartic acid modification. Residues 106-128 form a disordered region; sequence GVEGRKQGRSKYGTKRPKEGGKK.

This sequence belongs to the universal ribosomal protein uS12 family. In terms of assembly, part of the 30S ribosomal subunit. Contacts proteins S8 and S17. May interact with IF1 in the 30S initiation complex.

Its function is as follows. With S4 and S5 plays an important role in translational accuracy. In terms of biological role, interacts with and stabilizes bases of the 16S rRNA that are involved in tRNA selection in the A site and with the mRNA backbone. Located at the interface of the 30S and 50S subunits, it traverses the body of the 30S subunit contacting proteins on the other side and probably holding the rRNA structure together. The combined cluster of proteins S8, S12 and S17 appears to hold together the shoulder and platform of the 30S subunit. This Dictyoglomus thermophilum (strain ATCC 35947 / DSM 3960 / H-6-12) protein is Small ribosomal subunit protein uS12.